The sequence spans 540 residues: Glucose-6-phosphate isomerase (540 aa).

Glu346 (proton donor) is an active-site residue. Active-site residues include His377 and Lys505.

The protein belongs to the GPI family.

It is found in the cytoplasm. It carries out the reaction alpha-D-glucose 6-phosphate = beta-D-fructose 6-phosphate. Its pathway is carbohydrate biosynthesis; gluconeogenesis. It participates in carbohydrate degradation; glycolysis; D-glyceraldehyde 3-phosphate and glycerone phosphate from D-glucose: step 2/4. In terms of biological role, catalyzes the reversible isomerization of glucose-6-phosphate to fructose-6-phosphate. This is Glucose-6-phosphate isomerase from Francisella tularensis subsp. holarctica (strain FTNF002-00 / FTA).